The sequence spans 234 residues: Purine nucleoside phosphorylase DeoD-type (234 aa).

Residue His5 participates in a purine D-ribonucleoside binding. Phosphate contacts are provided by residues Gly21, Arg25, Arg44, and Arg88–Thr91. Residues Asp180–Glu182 and Ser204–Asp205 each bind a purine D-ribonucleoside. Asp205 acts as the Proton donor in catalysis.

This sequence belongs to the PNP/UDP phosphorylase family. As to quaternary structure, homohexamer; trimer of homodimers.

The catalysed reaction is a purine D-ribonucleoside + phosphate = a purine nucleobase + alpha-D-ribose 1-phosphate. It catalyses the reaction a purine 2'-deoxy-D-ribonucleoside + phosphate = a purine nucleobase + 2-deoxy-alpha-D-ribose 1-phosphate. Catalyzes the reversible phosphorolytic breakdown of the N-glycosidic bond in the beta-(deoxy)ribonucleoside molecules, with the formation of the corresponding free purine bases and pentose-1-phosphate. The sequence is that of Purine nucleoside phosphorylase DeoD-type from Buchnera aphidicola subsp. Acyrthosiphon pisum (strain 5A).